Consider the following 775-residue polypeptide: Endothelin-converting enzyme-like 1 (775 aa).

At 1 to 59 the chain is on the cytoplasmic side; sequence MEPPYSLTAHYDEFQEVKYVSRCGAGGARGASLPPGFPLGAARSATGARSGLPRWNRRE. The chain crosses the membrane as a helical; Signal-anchor for type II membrane protein span at residues 60 to 82; it reads VCLLSGLVFAAGLCAILAAMLAL. Residues 83–775 are Lumenal-facing; sequence KYLGPVAAGG…MNPAHKCSVW (693 aa). In terms of domain architecture, Peptidase M13 spans 98 to 775; it reads GCPERKAFAR…MNPAHKCSVW (678 aa). 4 disulfides stabilise this stretch: C123-C760, C131-C720, C187-C441, and C649-C772. 2 N-linked (GlcNAc...) asparagine glycosylation sites follow: N255 and N322. Residue H612 coordinates Zn(2+). E613 is an active-site residue. H616 lines the Zn(2+) pocket. N-linked (GlcNAc...) asparagine glycosylation is present at N656. E672 provides a ligand contact to Zn(2+). D676 (proton donor) is an active-site residue.

The protein belongs to the peptidase M13 family. The cofactor is Zn(2+). In terms of processing, N-glycosylated. As to expression, highly expressed in the CNS, in particular in putamen, spinal cord, medulla and subthalamic nucleus. A strong signal was also detected in uterine subepithelial cells and around renal blood vessels. Detected at lower levels in amygdala, caudate, thalamus, pancreas and skeletal muscle. Detected at very low levels in substantia nigra, cerebellum, cortex, corpus callosum and hippocampus.

The protein resides in the membrane. May contribute to the degradation of peptide hormones and be involved in the inactivation of neuronal peptides. This is Endothelin-converting enzyme-like 1 (ECEL1) from Homo sapiens (Human).